Consider the following 484-residue polypeptide: UDP-N-acetylmuramate--L-alanine ligase (484 aa).

Residue 125 to 131 participates in ATP binding; that stretch reads GTHGKTT.

Belongs to the MurCDEF family.

It is found in the cytoplasm. The catalysed reaction is UDP-N-acetyl-alpha-D-muramate + L-alanine + ATP = UDP-N-acetyl-alpha-D-muramoyl-L-alanine + ADP + phosphate + H(+). Its pathway is cell wall biogenesis; peptidoglycan biosynthesis. Cell wall formation. In Buchnera aphidicola subsp. Acyrthosiphon pisum (strain 5A), this protein is UDP-N-acetylmuramate--L-alanine ligase.